The primary structure comprises 332 residues: Fructose-1,6-bisphosphatase class 1 1 (332 aa).

Mg(2+)-binding residues include glutamate 92, aspartate 115, leucine 117, and aspartate 118. Substrate is bound by residues aspartate 118–serine 121, asparagine 211, tyrosine 244, tyrosine 262–tyrosine 264, and lysine 274. Residue glutamate 280 coordinates Mg(2+).

It belongs to the FBPase class 1 family. In terms of assembly, homotetramer. It depends on Mg(2+) as a cofactor.

It localises to the cytoplasm. It catalyses the reaction beta-D-fructose 1,6-bisphosphate + H2O = beta-D-fructose 6-phosphate + phosphate. Its pathway is carbohydrate biosynthesis; gluconeogenesis. The sequence is that of Fructose-1,6-bisphosphatase class 1 1 from Christiangramia forsetii (strain DSM 17595 / CGMCC 1.15422 / KT0803) (Gramella forsetii).